The following is a 115-amino-acid chain: uncharacterized protein (115 aa).

The protein belongs to the transposase 34 family.

This is an uncharacterized protein from Sinorhizobium fredii (strain NBRC 101917 / NGR234).